The sequence spans 543 residues: MLRYDERKLNNLTLSSFSKSGVSSDTRLYIAKENTDKAYVAPEKFSSKVLTWLGKMPLFKNTEVVQKHTENIRVQNQKILQTFLQALTEKYGEKAVNNALYMSSINMNKPLTQRLVVQITECVKGADGGFINLIKNKDNVGVMNAALVIKGGDTKVTEQNNDVGAESKQPLLDIALKGLKRTIPQLEQMDGNSLRENFQEMASGNGPLRSLMTNLQSLNKIPEAKQLNDYVTTLKNIQIGADRFSQWGTCGGEVERWIDKASTHELTQAVKKIHVIAKELKNVTAELEKIKAGASMPQTMSGPTLGLARFAVSSIPINQQTQVKLSDGMPVPVNTLTFDGKPVALAGSCPKNTPDALEAHMKMLLEKECSCLVVLTSEDQMQAKQLPAYFRGSYTFGEVHTNSQKVSSASQGGAIDQYNMQLSCGEKRYTIPVLHVKNWPDHQPLPSTDQLEYLADRVKNSNQNGAPGRSSSDKHLPMIHCLGGVGRTGTMAAALVLKDNPHSNLEQVRADFRNSRNNRMLEDASQFVQLKAMQAQLLMTTAS.

The segment at 35-139 (TDKAYVAPEK…FINLIKNKDN (105 aa)) is chaperone-binding. In terms of domain architecture, Bacterial Rho-GAP spans 162-293 (DVGAESKQPL…TAELEKIKAG (132 aa)). The Tyrosine-protein phosphatase domain occupies 315–543 (IPINQQTQVK…QAQLLMTTAS (229 aa)). C481 acts as the Phosphocysteine intermediate in catalysis.

Forms a complex with SicP.

The protein localises to the secreted. It localises to the host cytoplasm. The catalysed reaction is O-phospho-L-tyrosyl-[protein] + H2O = L-tyrosyl-[protein] + phosphate. Functionally, effector proteins function to alter host cell physiology and promote bacterial survival in host tissues. This protein includes tyrosine phosphatase and GTPase activating protein (GAP) activities. After bacterial internalization, GAP mediates the reversal of the cytoskeletal changes induced by SopE. This function is independent of its tyrosine phosphatase activity, which remains unclear. This chain is Secreted effector protein SptP (sptP), found in Salmonella typhi.